Reading from the N-terminus, the 292-residue chain is Lyso-ornithine lipid O-acyltransferase (292 aa).

A helical transmembrane segment spans residues Gly11–Leu31. Residues Arg258–Pro292 form a disordered region.

The protein belongs to the 1-acyl-sn-glycerol-3-phosphate acyltransferase family. OlsA subfamily.

Its subcellular location is the membrane. The catalysed reaction is a lyso-ornithine lipid + a fatty acyl-[ACP] = an N(2)-[(3R)-3-(acyloxy)acyl]-L-ornithine lipid + holo-[ACP]. The protein operates within lipid metabolism. Catalyzes the second step in the formation of ornithine lipids, which are phosphorus-free membrane lipids. Uses acyl-acyl carrier protein (acyl-AcpP) as an acyl donor and converts lyso-ornithine lipid (LOL) into ornithine lipid (OL). The protein is Lyso-ornithine lipid O-acyltransferase of Rhizobium meliloti (strain 1021) (Ensifer meliloti).